The sequence spans 197 residues: Imidazoleglycerol-phosphate dehydratase (197 aa).

This sequence belongs to the imidazoleglycerol-phosphate dehydratase family.

Its subcellular location is the cytoplasm. It carries out the reaction D-erythro-1-(imidazol-4-yl)glycerol 3-phosphate = 3-(imidazol-4-yl)-2-oxopropyl phosphate + H2O. Its pathway is amino-acid biosynthesis; L-histidine biosynthesis; L-histidine from 5-phospho-alpha-D-ribose 1-diphosphate: step 6/9. The polypeptide is Imidazoleglycerol-phosphate dehydratase (Marinomonas sp. (strain MWYL1)).